Here is a 418-residue protein sequence, read N- to C-terminus: Putative ion-transport protein YfeO (418 aa).

Transmembrane regions (helical) follow at residues 10–30 (LLLS…LIMV), 54–74 (DSPL…GLVI), 99–119 (ALPG…SLGP), 120–140 (EHPI…RLLP), 149–169 (ILAS…AALI), 186–206 (LFAP…FFHP), 223–243 (ILSG…AVWC), 258–278 (VFVL…GGPV), 300–320 (DYFL…ASGF), 322–342 (GGRI…LHEH), 343–363 (VPAV…VLVV), and 371–391 (LFMA…CIVM).

This sequence belongs to the chloride channel (TC 2.A.49) family.

Its subcellular location is the cell membrane. The chain is Putative ion-transport protein YfeO from Escherichia coli O45:K1 (strain S88 / ExPEC).